A 327-amino-acid chain; its full sequence is N-acetyl-gamma-glutamyl-phosphate reductase (327 aa).

Residue cysteine 136 is part of the active site.

This sequence belongs to the NAGSA dehydrogenase family. Type 1 subfamily.

Its subcellular location is the cytoplasm. It carries out the reaction N-acetyl-L-glutamate 5-semialdehyde + phosphate + NADP(+) = N-acetyl-L-glutamyl 5-phosphate + NADPH + H(+). Its pathway is amino-acid biosynthesis; L-arginine biosynthesis; N(2)-acetyl-L-ornithine from L-glutamate: step 3/4. Functionally, catalyzes the NADPH-dependent reduction of N-acetyl-5-glutamyl phosphate to yield N-acetyl-L-glutamate 5-semialdehyde. The polypeptide is N-acetyl-gamma-glutamyl-phosphate reductase (Xylella fastidiosa (strain M23)).